We begin with the raw amino-acid sequence, 1100 residues long: Tyrosine-protein kinase JAK3 (1100 aa).

Positions 1–223 are cytokine/interferon/growth hormone receptors; the sequence is MAPPSEETPL…RRTVVQALRR (223 aa). Residue serine 17 is modified to Phosphoserine. Positions 24–353 constitute an FERM domain; sequence GALHVLLPPR…GYFRLICDSR (330 aa). The SH2; atypical domain occupies 372–472; that stretch reads LCHGPITLDF…GTALNLTSCC (101 aa). One can recognise a Protein kinase 1 domain in the interval 517–777; that stretch reads LEWHENLGHG…AILRDLNGLI (261 aa). Tyrosine 781 bears the Phosphotyrosine; by autocatalysis mark. The Protein kinase 2 domain occupies 818 to 1091; it reads LKYISLLGKG…PAFDTLSPQL (274 aa). Residues 824–832 and lysine 851 each bind ATP; that span reads LGKGNFGSV. Tyrosine 900 and tyrosine 935 each carry phosphotyrosine. The active-site Proton acceptor is the aspartate 945. Phosphotyrosine; by autocatalysis occurs at positions 976 and 977.

The protein belongs to the protein kinase superfamily. Tyr protein kinase family. JAK subfamily. In terms of assembly, interacts with STAM2 and MYO18A. Interacts with SHB. Interacts with CD69. In terms of processing, autophosphorylated, leading to regulate its activity. IL2 promotes phosphorylation on tyrosine residues, including autophosphorylation on Tyr-781. Dephosphorylation of Tyr-976 and Tyr-977 by PTPN2 negatively regulates cytokine-mediated signaling. In contrast with the ubiquitous expression of the other JAKs, JAK3 is predominantly expressed in hematopoietic tissues.

It localises to the endomembrane system. The protein localises to the cytoplasm. It carries out the reaction L-tyrosyl-[protein] + ATP = O-phospho-L-tyrosyl-[protein] + ADP + H(+). Functionally, non-receptor tyrosine kinase involved in various processes such as cell growth, development, or differentiation. Mediates essential signaling events in both innate and adaptive immunity and plays a crucial role in hematopoiesis during T-cells development. In the cytoplasm, plays a pivotal role in signal transduction via its association with type I receptors sharing the common subunit gamma such as IL2R, IL4R, IL7R, IL9R, IL15R and IL21R. Following ligand binding to cell surface receptors, phosphorylates specific tyrosine residues on the cytoplasmic tails of the receptor, creating docking sites for STATs proteins. Subsequently, phosphorylates the STATs proteins once they are recruited to the receptor. Phosphorylated STATs then form homodimer or heterodimers and translocate to the nucleus to activate gene transcription. For example, upon IL2R activation by IL2, JAK1 and JAK3 molecules bind to IL2R beta (IL2RB) and gamma chain (IL2RG) subunits inducing the tyrosine phosphorylation of both receptor subunits on their cytoplasmic domain. Then, STAT5A and STAT5B are recruited, phosphorylated and activated by JAK1 and JAK3. Once activated, dimerized STAT5 translocates to the nucleus and promotes the transcription of specific target genes in a cytokine-specific fashion. The chain is Tyrosine-protein kinase JAK3 from Rattus norvegicus (Rat).